We begin with the raw amino-acid sequence, 182 residues long: MIVKIIKGDITEIEAEAIVNAANSYLEHGGGVARAIVEKGGYIIQKESREYVRKYGPVPTGGVAVTSAGKLKAKYVIHAVGPRYGIEGEEKLEEAIRNALRKAEELKLSSIALPAISTGIYGYPYEICAEKMVKVIKEEYTNFKHLNTIIVSLYSEEAYNIFVNIFERELAKEKNITLKMSP.

One can recognise a Macro domain in the interval 1–170 (MIVKIIKGDI…IFVNIFEREL (170 aa)).

This is an uncharacterized protein from Sulfurisphaera tokodaii (strain DSM 16993 / JCM 10545 / NBRC 100140 / 7) (Sulfolobus tokodaii).